We begin with the raw amino-acid sequence, 63 residues long: uncharacterized protein (63 aa).

This is an uncharacterized protein from Avena byzantina (Oat).